The sequence spans 684 residues: Glycine--tRNA ligase beta subunit (684 aa).

The protein belongs to the class-II aminoacyl-tRNA synthetase family. Tetramer of two alpha and two beta subunits.

The protein localises to the cytoplasm. It catalyses the reaction tRNA(Gly) + glycine + ATP = glycyl-tRNA(Gly) + AMP + diphosphate. This is Glycine--tRNA ligase beta subunit from Pseudomonas aeruginosa (strain LESB58).